Reading from the N-terminus, the 606-residue chain is Pro-secreted protein ORF2 (606 aa).

A signal peptide spans 1 to 19 (MSLCRLLLMLAMCCGVSRG). A disordered region spans residues 22 to 54 (TLPAGGRRGQRRRDNSAQWSTQQRPEGAVGPAP). The Nuclear localization signal signature appears at 28–34 (RRGQRRR). N255 carries N-linked (GlcNAc...) asparagine; by host glycosylation. The particle formation stretch occupies residues 313–339 (ILGVLFNLADTVLGGLPSTLLRAASGQ). N510 carries N-linked (GlcNAc...) asparagine; by host glycosylation.

It belongs to the hepevirus capsid protein family. In terms of assembly, homodimer. As to quaternary structure, self-assembles to form the capsid. The capsid is dominated by dimers that define the 30 morphological units. Interacts with phosphorylated protein ORF3. Post-translationally, N-glycosylated.

It localises to the secreted. The protein localises to the virion. It is found in the host cytoplasm. Its subcellular location is the host endoplasmic reticulum. The protein resides in the host Golgi apparatus. It localises to the host cell surface. The protein localises to the host nucleus. Its function is as follows. Plays a role in the inhibition of host antibody-mediated neutralization without blocking viral cell entry. Functionally, forms an icosahedral capsid with a T=1 symmetry and a 34 nm diameter. The capsid is composed of 60 copies linked to each other. Binds to the 5' end of the genomic RNA to mediate genome encapsidation. This Gallus gallus (Chicken) protein is Pro-secreted protein ORF2.